Consider the following 135-residue polypeptide: Mediator of RNA polymerase II transcription subunit 10 (135 aa).

It belongs to the Mediator complex subunit 10 family. In terms of assembly, component of the Mediator complex.

The protein resides in the nucleus. Its function is as follows. Component of the Mediator complex, a coactivator involved in the regulated transcription of nearly all RNA polymerase II-dependent genes. Mediator functions as a bridge to convey information from gene-specific regulatory proteins to the basal RNA polymerase II transcription machinery. Mediator is recruited to promoters by direct interactions with regulatory proteins and serves as a scaffold for the assembly of a functional preinitiation complex with RNA polymerase II and the general transcription factors. In Xenopus tropicalis (Western clawed frog), this protein is Mediator of RNA polymerase II transcription subunit 10 (med10).